Reading from the N-terminus, the 568-residue chain is Light-independent protochlorophyllide reductase subunit B (568 aa).

Asp36 is a binding site for [4Fe-4S] cluster. The Proton donor role is filled by Asp293. 437–438 serves as a coordination point for substrate; it reads GM. The segment at 476–517 is disordered; sequence ANGHPEAGVSVGAAEPSAAPSRSVVTEESNRATTPSSSTVHP. Polar residues predominate over residues 498–515; the sequence is SVVTEESNRATTPSSSTV.

Belongs to the ChlB/BchB/BchZ family. In terms of assembly, protochlorophyllide reductase is composed of three subunits; BchL, BchN and BchB. Forms a heterotetramer of two BchB and two BchN subunits. Requires [4Fe-4S] cluster as cofactor.

The catalysed reaction is chlorophyllide a + oxidized 2[4Fe-4S]-[ferredoxin] + 2 ADP + 2 phosphate = protochlorophyllide a + reduced 2[4Fe-4S]-[ferredoxin] + 2 ATP + 2 H2O. It participates in porphyrin-containing compound metabolism; bacteriochlorophyll biosynthesis (light-independent). Functionally, component of the dark-operative protochlorophyllide reductase (DPOR) that uses Mg-ATP and reduced ferredoxin to reduce ring D of protochlorophyllide (Pchlide) to form chlorophyllide a (Chlide). This reaction is light-independent. The NB-protein (BchN-BchB) is the catalytic component of the complex. The protein is Light-independent protochlorophyllide reductase subunit B of Roseiflexus sp. (strain RS-1).